The primary structure comprises 325 residues: NADH-quinone oxidoreductase subunit H (325 aa).

9 consecutive transmembrane segments (helical) span residues 11–31, 50–69, 81–101, 114–134, 154–174, 186–206, 237–257, 265–285, and 304–324; these read ILLS…CGAF, NRVG…KMFF, VIFT…FAIV, IGIL…LFAG, VSYE…AGSF, LWNV…GVAV, FFVG…TLFF, LPPF…FILI, and VCLP…LWQA.

It belongs to the complex I subunit 1 family. NDH-1 is composed of 13 different subunits. Subunits NuoA, H, J, K, L, M, N constitute the membrane sector of the complex.

It is found in the cell inner membrane. It carries out the reaction a quinone + NADH + 5 H(+)(in) = a quinol + NAD(+) + 4 H(+)(out). NDH-1 shuttles electrons from NADH, via FMN and iron-sulfur (Fe-S) centers, to quinones in the respiratory chain. The immediate electron acceptor for the enzyme in this species is believed to be ubiquinone. Couples the redox reaction to proton translocation (for every two electrons transferred, four hydrogen ions are translocated across the cytoplasmic membrane), and thus conserves the redox energy in a proton gradient. This subunit may bind ubiquinone. The chain is NADH-quinone oxidoreductase subunit H from Salmonella arizonae (strain ATCC BAA-731 / CDC346-86 / RSK2980).